The sequence spans 511 residues: Bifunctional purine biosynthesis protein PurH (511 aa).

The 145-residue stretch at 1-145 (MKKRALVSVS…KNHKFVSVIV (145 aa)) folds into the MGS-like domain.

Belongs to the PurH family.

The catalysed reaction is (6R)-10-formyltetrahydrofolate + 5-amino-1-(5-phospho-beta-D-ribosyl)imidazole-4-carboxamide = 5-formamido-1-(5-phospho-D-ribosyl)imidazole-4-carboxamide + (6S)-5,6,7,8-tetrahydrofolate. It carries out the reaction IMP + H2O = 5-formamido-1-(5-phospho-D-ribosyl)imidazole-4-carboxamide. The protein operates within purine metabolism; IMP biosynthesis via de novo pathway; 5-formamido-1-(5-phospho-D-ribosyl)imidazole-4-carboxamide from 5-amino-1-(5-phospho-D-ribosyl)imidazole-4-carboxamide (10-formyl THF route): step 1/1. It participates in purine metabolism; IMP biosynthesis via de novo pathway; IMP from 5-formamido-1-(5-phospho-D-ribosyl)imidazole-4-carboxamide: step 1/1. This is Bifunctional purine biosynthesis protein PurH from Bacillus anthracis (strain A0248).